Reading from the N-terminus, the 154-residue chain is Transcriptional repressor NrdR (154 aa).

Residues 3–34 fold into a zinc finger; that stretch reads CPFCGANDTKVIDSRLVAEGEQVRRRRECLAC. Residues 49–139 form the ATP-cone domain; that stretch reads PRLIKTDGSR…VYRRFQDLNE (91 aa).

It belongs to the NrdR family. The cofactor is Zn(2+).

Negatively regulates transcription of bacterial ribonucleotide reductase nrd genes and operons by binding to NrdR-boxes. This chain is Transcriptional repressor NrdR, found in Pseudomonas fluorescens (strain Pf0-1).